An 81-amino-acid polypeptide reads, in one-letter code: Putative membrane protein insertion efficiency factor (81 aa).

The interval N61–E81 is disordered.

The protein belongs to the UPF0161 family.

The protein resides in the cell inner membrane. In terms of biological role, could be involved in insertion of integral membrane proteins into the membrane. The protein is Putative membrane protein insertion efficiency factor of Pseudomonas putida (strain ATCC 700007 / DSM 6899 / JCM 31910 / BCRC 17059 / LMG 24140 / F1).